Reading from the N-terminus, the 1793-residue chain is Brefeldin A-inhibited guanine nucleotide-exchange protein 2 (1793 aa).

N-acetylalanine is present on A2. Disordered stretches follow at residues 45–71, 266–299, and 579–606; these read NSLQKSPPPSSSAATDSESESSVPGPL, TMSGSGSGSGSGGQDGAYGTTTVETTNPTDLLDS, and GSPQLANGNADESADGSDTYSESSGGTS. Residues 55-66 are compositionally biased toward low complexity; the sequence is SSAATDSESESS. Gly residues predominate over residues 270-281; the sequence is SGSGSGSGGQDG. Composition is skewed to polar residues over residues 284–294 and 594–605; these read GTTTVETTNPT and GSDTYSESSGGT. S595 bears the Phosphoserine mark. Residues 610–797 form the SEC7 domain; the sequence is AIEQRRAYKL…RSLYERITKH (188 aa). E712 is an active-site residue. Residues 1311 to 1327 show a composition bias toward polar residues; the sequence is NKYKGTSGKIPQSSLHS. Residues 1311 to 1333 form a disordered region; it reads NKYKGTSGKIPQSSLHSGKSGKQ.

As to quaternary structure, homodimer.

The protein resides in the cytoplasm. Its subcellular location is the cytosol. It is found in the membrane. With respect to regulation, inhibited by brefeldin A. Activates the ARF proteins by exchanging bound GDP for free GTP. Plays a role in vesicular protein sorting. This Arabidopsis thaliana (Mouse-ear cress) protein is Brefeldin A-inhibited guanine nucleotide-exchange protein 2 (BIG2).